Reading from the N-terminus, the 485-residue chain is Glutamyl-tRNA(Gln) amidotransferase subunit A (485 aa).

Active-site charge relay system residues include lysine 79 and serine 154. The active-site Acyl-ester intermediate is the serine 178.

Belongs to the amidase family. GatA subfamily. In terms of assembly, heterotrimer of A, B and C subunits.

It catalyses the reaction L-glutamyl-tRNA(Gln) + L-glutamine + ATP + H2O = L-glutaminyl-tRNA(Gln) + L-glutamate + ADP + phosphate + H(+). Its function is as follows. Allows the formation of correctly charged Gln-tRNA(Gln) through the transamidation of misacylated Glu-tRNA(Gln) in organisms which lack glutaminyl-tRNA synthetase. The reaction takes place in the presence of glutamine and ATP through an activated gamma-phospho-Glu-tRNA(Gln). In Staphylococcus aureus (strain MRSA252), this protein is Glutamyl-tRNA(Gln) amidotransferase subunit A.